A 402-amino-acid chain; its full sequence is Serine/threonine transporter SstT (402 aa).

The next 9 helical transmembrane spans lie at 19 to 39 (IGVV…AIGL), 43 to 63 (LFVG…VISA), 86 to 106 (TFAA…TLIL), 138 to 158 (AITE…GLAM), 179 to 199 (VVKW…FTSI), 212 to 232 (LLIL…NPII), 287 to 307 (IPLG…ILTL), 327 to 347 (VVAA…LLLI), and 354 to 374 (FGIS…VGVI).

Belongs to the dicarboxylate/amino acid:cation symporter (DAACS) (TC 2.A.23) family.

The protein localises to the cell membrane. The enzyme catalyses L-serine(in) + Na(+)(in) = L-serine(out) + Na(+)(out). It carries out the reaction L-threonine(in) + Na(+)(in) = L-threonine(out) + Na(+)(out). Its function is as follows. Involved in the import of serine and threonine into the cell, with the concomitant import of sodium (symport system). This chain is Serine/threonine transporter SstT, found in Streptococcus agalactiae serotype III (strain NEM316).